The chain runs to 254 residues: MRLTALTAFADNYIWMLIDDDGAAVVVDPGDAAPVLALADQGLRVDSILLTHHHDDHIGGVPALQARFPGVRVIAPVEERIPTATERVGEGERVQALGRMFHVLSVPGHTRSHIAFHTAEHLFSGDSLFSLGCGRLFEGTPSQLLASMLKLGALPAQLLLCCAHEYTVSNAVFARHVDPANAALWQRQEEALAMRRDDRSTLPVTLANEFDCNPFLRVHTAPIRASVSAHLGRDVVDDVDVMAGLRHWKDGFRA.

Zn(2+) contacts are provided by H52, H54, D56, H57, H109, D126, and H164.

The protein belongs to the metallo-beta-lactamase superfamily. Glyoxalase II family. Monomer. It depends on Zn(2+) as a cofactor.

The catalysed reaction is an S-(2-hydroxyacyl)glutathione + H2O = a 2-hydroxy carboxylate + glutathione + H(+). Its pathway is secondary metabolite metabolism; methylglyoxal degradation; (R)-lactate from methylglyoxal: step 2/2. Functionally, thiolesterase that catalyzes the hydrolysis of S-D-lactoyl-glutathione to form glutathione and D-lactic acid. The protein is Hydroxyacylglutathione hydrolase of Stenotrophomonas maltophilia (strain R551-3).